We begin with the raw amino-acid sequence, 228 residues long: Phosphoglycolate phosphatase (228 aa).

Asp12 acts as the Nucleophile in catalysis. The Mg(2+) site is built by Asp12, Asp14, and Asp177.

This sequence belongs to the HAD-like hydrolase superfamily. CbbY/CbbZ/Gph/YieH family. Mg(2+) is required as a cofactor.

It catalyses the reaction 2-phosphoglycolate + H2O = glycolate + phosphate. Its pathway is organic acid metabolism; glycolate biosynthesis; glycolate from 2-phosphoglycolate: step 1/1. Its function is as follows. Specifically catalyzes the dephosphorylation of 2-phosphoglycolate. Is involved in the dissimilation of the intracellular 2-phosphoglycolate formed during the DNA repair of 3'-phosphoglycolate ends, a major class of DNA lesions induced by oxidative stress. This is Phosphoglycolate phosphatase from Vibrio vulnificus (strain CMCP6).